A 1007-amino-acid polypeptide reads, in one-letter code: Kinesin-like protein KIN-7D, chloroplastic (1007 aa).

Residues 1–53 (MATRPASRQRRASSAAAAVAVVRSSPQPQQQQQQQLPIPQSGSPTSTTTTTTS) constitute a chloroplast transit peptide. Over residues 1–55 (MATRPASRQRRASSAAAAVAVVRSSPQPQQQQQQQLPIPQSGSPTSTTTTTTSSS) the composition is skewed to low complexity. The segment at 1 to 79 (MATRPASRQR…LFAGLDEDPA (79 aa)) is disordered. Residues 83-402 (NVTVTVRFRP…LKFAHRAKRI (320 aa)) form the Kinesin motor domain. 163 to 170 (GVTSSGKT) is an ATP binding site. Positions 403–495 (EVQASQNKII…QRLTKLILVS (93 aa)) form a coiled coil. The tract at residues 579–607 (ILTSSEGDKSSLTKSTAPSTPIGESVNFP) is disordered. Coiled-coil stretches lie at residues 687 to 716 (NNEK…ERQI), 754 to 791 (AADN…TLQA), and 836 to 907 (SVEI…SVRS). The disordered stretch occupies residues 901–941 (ELASVRSPTPRRANSGLRGTRRDSISRRHEPAPRRDNNAGY). Residues 920 to 941 (TRRDSISRRHEPAPRRDNNAGY) are compositionally biased toward basic and acidic residues. Positions 942–982 (EREKALEAVLMEKEQKEAELQRRIEESKQKEAFLESELANM) form a coiled coil.

It belongs to the TRAFAC class myosin-kinesin ATPase superfamily. Kinesin family. KIN-7 subfamily. In terms of assembly, binds microtubules. Homodimer. Mg(2+) serves as cofactor.

The protein localises to the plastid. It is found in the chloroplast. Functionally, probable minus end-directed motor protein with a microtubule-enhanced ATPase activity. Binds ATP/ADP in vitro. Retains total enzymatic activity even after the removal of the ADP bound in the active site. The protein is Kinesin-like protein KIN-7D, chloroplastic of Oryza sativa subsp. japonica (Rice).